A 288-amino-acid polypeptide reads, in one-letter code: Ribosome biogenesis GTPase A (288 aa).

The region spanning 14 to 179 (RRQVTEKLKL…LLDTPGILWP (166 aa)) is the CP-type G domain. GTP is bound by residues 58 to 61 (NKVD), 131 to 136 (NVGKST), and Gly-175.

Belongs to the TRAFAC class YlqF/YawG GTPase family. MTG1 subfamily. In terms of assembly, interacts with ctc. Interacts with the immature 50S ribosome subunit. 2 molecules of rbgA bind to one 50S subunit.

The protein resides in the cytoplasm. In terms of biological role, essential protein that is required for a late step of 50S ribosomal subunit assembly. Has GTPase activity that is stimulated by interaction with the immature 50S ribosome subunit. Binds to the 23S rRNA. Required for the association of ribosomal proteins rplP and rpmA with the large subunit. The polypeptide is Ribosome biogenesis GTPase A (Priestia megaterium (strain DSM 319 / IMG 1521) (Bacillus megaterium)).